A 167-amino-acid polypeptide reads, in one-letter code: U-scoloptoxin(08)-Er5a (167 aa).

Positions 1-22 (MKTNCEFPLLCLLIVLVANVEG) are cleaved as a signal peptide. Positions 23 to 94 (EVEDTGLKMV…KRLWRNWERR (72 aa)) are excised as a propeptide. RLWRNWE repeat units follow at residues 34–40 (RLWRNWE), 61–67 (RLWRNWE), and 86–92 (RLWRNWE). Gln-95 carries the pyrrolidone carboxylic acid modification. Residues 107–113 (ELWRNWE) form an RLWRNWE 4; approximate repeat. Residues 112-118 (WEDLKRR) constitute a propeptide that is removed on maturation. Residue Gln-119 is modified to Pyrrolidone carboxylic acid. Residues 134–140 (RLWRNWE) form an RLWRNWE 5 repeat. Positions 139-167 (WEDNHATLRKRSADSLSRQKRLGKERGKE) are excised as a propeptide. The disordered stretch occupies residues 147–167 (RKRSADSLSRQKRLGKERGKE).

Belongs to the scoloptoxin-08 family. As to expression, expressed by the venom gland.

It localises to the secreted. The chain is U-scoloptoxin(08)-Er5a from Ethmostigmus rubripes (Giant centipede).